The primary structure comprises 846 residues: Outer membrane channel protein CpnT (846 aa).

Residues Met1–Leu443 are NTD. Residues Arg442–Ala630 form a disordered region. 2 stretches are compositionally biased toward pro residues: residues Leu450–Ile466 and Ala475–Asp504. 2 stretches are compositionally biased toward low complexity: residues Glu508–Ala517 and Ala562–Pro586. A TNT region spans residues Arg651–Gln846. Residues Tyr751–Gln846 enclose the TNT domain. Residue Arg757 is part of the active site. Arg780 contacts NAD(+). Gln822 is an active-site residue.

Interacts with the immunity factor for TNT (IFT) homolog. The C-terminal domain (TNT) is probably cleaved.

It localises to the cell outer membrane. The protein localises to the secreted. The protein resides in the cell surface. It catalyses the reaction NAD(+) + H2O = ADP-D-ribose + nicotinamide + H(+). Its activity is regulated as follows. Glycohydrolase activity is completely inhibited by interaction with the immunity factor for TNT (IFT) homolog. This inhibition protects M.bovis from self-poisoning. The N-terminal domain (NTD) forms an outer membrane channel and is used for uptake of nutrients across the outer membrane. Also confers susceptibility to structurally different antibiotics and antituberculosis drugs, and to toxic immune factors such as nitric oxide (NO). The C-terminal domain (TNT) is dispensable for normal growth in macrophages. In Mycobacterium bovis (strain BCG / Pasteur 1173P2), this protein is Outer membrane channel protein CpnT.